Consider the following 87-residue polypeptide: MSKPESCDENACKPFACAIQDCLIENGYNESKCTKAIDNLYKCCKQFYEENGPDAASVCCPKFNLLQLKLKQRSLGKIDAELIQSRK.

The 43-residue stretch at 9–51 (ENACKPFACAIQDCLIENGYNESKCTKAIDNLYKCCKQFYEEN) folds into the CHCH domain. 2 short sequence motifs (cx9C motif) span residues 12–22 (CKPFACAIQDC) and 33–43 (CTKAIDNLYKC). Cystine bridges form between Cys12-Cys43 and Cys22-Cys33.

The protein belongs to the CMC4 family.

It localises to the mitochondrion intermembrane space. This Clavispora lusitaniae (strain ATCC 42720) (Yeast) protein is Cx9C motif-containing protein 4, mitochondrial (CMC4).